Reading from the N-terminus, the 338-residue chain is P2Y purinoceptor 14 (338 aa).

Topologically, residues 1-29 (MINSTSTQPPDESCSQNLLITQQIIPVLY) are extracellular. The N-linked (GlcNAc...) asparagine glycan is linked to N3. Residues 30–50 (CMVFIAGILLNGVSGWIFFYV) traverse the membrane as a helical segment. Over 51–55 (PSSKS) the chain is Cytoplasmic. A helical membrane pass occupies residues 56 to 76 (FIIYLKNIVIADFVMSLTFPF). Residues 77–96 (KILGDSGLGPWQLNVFVCRV) are Extracellular-facing. C94 and C172 form a disulfide bridge. A helical transmembrane segment spans residues 97–117 (SAVLFYVNMYVSIVFFGLISF). Residues 118–139 (DRYYKIVKPLWTSFIQSVSYSK) lie on the Cytoplasmic side of the membrane. Residues 140–160 (LLSVIVWMLMLLLAVPNIILT) form a helical membrane-spanning segment. Residue N161 is glycosylated (N-linked (GlcNAc...) asparagine). Residues 161-188 (NQSVREVTQIKCIELKSELGRKWHKASN) lie on the Extracellular side of the membrane. The chain crosses the membrane as a helical span at residues 189 to 209 (YIFVAIFWIVFLLLIVFYTAI). The Cytoplasmic segment spans residues 210–234 (TKKIFKSHLKSSRNSTSVKKKSSRN). Residues 235-255 (IFSIVFVFFVCFVPYHIARIP) form a helical membrane-spanning segment. The Extracellular portion of the chain corresponds to 256–278 (YTKSQTEAHYSCQSKEILRYMKE). The helical transmembrane segment at 279 to 299 (FTLLLSAANVCLDPIIYFFLC) threads the bilayer. Topologically, residues 300-338 (QPFREILCKKLHIPLKAQNDLDISRIKRGNTTLESTDTL) are cytoplasmic.

The protein belongs to the G-protein coupled receptor 1 family. As to expression, highest expression in the placenta, adipose tissue, stomach and intestine, intermediate levels in the brain, spleen, lung and heart, lowest levels in the kidney.

Its subcellular location is the cell membrane. Receptor for UDP-glucose and other UDP-sugar coupled to G-proteins. Not activated by ATP, ADP, UTP or ATP. The chain is P2Y purinoceptor 14 (P2RY14) from Homo sapiens (Human).